The sequence spans 417 residues: MTVAEIRARNLSIPAPSQITRPALAGEKETMVLNMGPHHPSTHGVLRLVVELDGETVVDVAPDIGFLHTGIEKTMESKTYQKAVVLTDRTDYLAPLSNNLSYVLAVEKLLGCEVPERATVARVLLVELQRIASHLVWLGTHALDLAAMSVFLYGFREREQILDIFELVSGARMMTSYFRVGGLAYDLPAGFDAAVEAFLQIMPGRIDEYEALLTDNPLWIERTQGIGAIDSEAAIALGLTGPGLRATGVAWDLRKTMPYCGYETYSFAIPTATHGDIYDRYLVRMAEMRESVSICRQALQRLRDIGPGPYMTSDRKIAPPPKSEITQSMEALIHHFKLWTEGFKPPRGDALAAVESPRGELATYIVSDGSAKPYRVHFRAPSFVNLQSLPHMARGHLVADLVALIASLDPVLGEVDR.

Belongs to the complex I 49 kDa subunit family. As to quaternary structure, NDH-1 is composed of 14 different subunits. Subunits NuoB, C, D, E, F, and G constitute the peripheral sector of the complex.

The protein localises to the cell membrane. It catalyses the reaction a quinone + NADH + 5 H(+)(in) = a quinol + NAD(+) + 4 H(+)(out). Its function is as follows. NDH-1 shuttles electrons from NADH, via FMN and iron-sulfur (Fe-S) centers, to quinones in the respiratory chain. The immediate electron acceptor for the enzyme in this species is believed to be ubiquinone. Couples the redox reaction to proton translocation (for every two electrons transferred, four hydrogen ions are translocated across the cytoplasmic membrane), and thus conserves the redox energy in a proton gradient. The sequence is that of NADH-quinone oxidoreductase subunit D 2 from Roseiflexus sp. (strain RS-1).